Reading from the N-terminus, the 367-residue chain is Germination protease (367 aa).

Positions 1-15 (MKEPLDLSKYAVRTD) are excised as a propeptide.

This sequence belongs to the peptidase A25 family. Homotetramer. Autoproteolytically processed. The inactive tetrameric zymogen termed p46 autoprocesses to a smaller form termed p41, which is active only during spore germination.

The catalysed reaction is Endopeptidase action with P4 Glu or Asp, P1 preferably Glu &gt; Asp, P1' hydrophobic and P2' Ala.. Its function is as follows. Initiates the rapid degradation of small, acid-soluble proteins during spore germination. The protein is Germination protease of Bacillus cytotoxicus (strain DSM 22905 / CIP 110041 / 391-98 / NVH 391-98).